A 462-amino-acid polypeptide reads, in one-letter code: Lipase A (462 aa).

The signal sequence occupies residues Met1–Ala21. An intrachain disulfide couples Cys122 to Cys294. Catalysis depends on charge relay system residues Ser205, Asp355, and His387. Cys371 and Cys415 are oxidised to a cystine.

The protein belongs to the AB hydrolase superfamily. Lipase family. Monomer.

It localises to the secreted. The enzyme catalyses a triacylglycerol + H2O = a diacylglycerol + a fatty acid + H(+). Functionally, hydrolyzes triglycerides, with a preference for substrates with short-chain lengths (C4 to C8). Has the highest activity with tributyrin (C4), followed by tricaproin (C6) and tricaprylin (C8). Can also hydrolyze vinylacetate (C2) and triolein (C18), but with lower efficiency. Has no activity with tripalmitin (C16). In Moesziomyces aphidis (Pseudozyma aphidis), this protein is Lipase A.